We begin with the raw amino-acid sequence, 218 residues long: Thiopurine S-methyltransferase (218 aa).

The S-adenosyl-L-methionine site is built by tryptophan 10, leucine 45, glutamate 66, and arginine 123.

It belongs to the class I-like SAM-binding methyltransferase superfamily. TPMT family.

Its subcellular location is the cytoplasm. The catalysed reaction is S-adenosyl-L-methionine + a thiopurine = S-adenosyl-L-homocysteine + a thiopurine S-methylether.. The polypeptide is Thiopurine S-methyltransferase (Pseudomonas fluorescens (strain SBW25)).